A 205-amino-acid polypeptide reads, in one-letter code: MAGSYGETFDGKILDDLSGAWVEKHNWSDILRRLTKIKFALQADRDMIPGIVEDLSTEIPVDENTRFPSGKVYHLLTKEMLMAIEAIHAASSFKRRAEEKNNVNPRQRFEAESSSSQLPSGGLVVRPAAGSGDSSLGEDLFSNSKLDDASTAFHKSLATLKGSRPKAVVQRTFEKEYSLRWTAAAPVAAAGGTPPGGRSWTWNLV.

The segment covering Glu-98–Ala-111 has biased composition (basic and acidic residues). Residues Glu-98–Gly-130 are disordered.

It is found in the virion. This chain is Coat protein, found in Beta vulgaris (Sugar beet).